Here is a 910-residue protein sequence, read N- to C-terminus: Leucine--tRNA ligase (910 aa).

Residues 42–52 carry the 'HIGH' region motif; it reads PYPSGKLHMGH. The 'KMSKS' region signature appears at 658-662; the sequence is TMSKS. Position 661 (K661) interacts with ATP.

The protein belongs to the class-I aminoacyl-tRNA synthetase family.

It localises to the cytoplasm. The enzyme catalyses tRNA(Leu) + L-leucine + ATP = L-leucyl-tRNA(Leu) + AMP + diphosphate. The chain is Leucine--tRNA ligase from Acidovorax sp. (strain JS42).